The chain runs to 205 residues: Small ribosomal subunit protein uS4 (205 aa).

Residues 1–16 (MSKRESSKYKIDRRMG) are compositionally biased toward basic and acidic residues. Residues 1–46 (MSKRESSKYKIDRRMGENIWGRPKSPVNRREYGPGQHGQRRKSKLS) are disordered. The S4 RNA-binding domain occupies 94–157 (SRLDAIVYRA…KQLVTVLEAV (64 aa)).

It belongs to the universal ribosomal protein uS4 family. As to quaternary structure, part of the 30S ribosomal subunit. Contacts protein S5. The interaction surface between S4 and S5 is involved in control of translational fidelity.

Functionally, one of the primary rRNA binding proteins, it binds directly to 16S rRNA where it nucleates assembly of the body of the 30S subunit. In terms of biological role, with S5 and S12 plays an important role in translational accuracy. The sequence is that of Small ribosomal subunit protein uS4 from Sinorhizobium medicae (strain WSM419) (Ensifer medicae).